The primary structure comprises 465 residues: Presenilin spe-4 (465 aa).

The Cytoplasmic portion of the chain corresponds to 1–18 (MDTLRSISSELVRSSQLR). Residues 19 to 39 (WTLFSVIANMSLTLSIWIGVY) form a helical membrane-spanning segment. The Lumenal segment spans residues 40 to 71 (NMEVNSELSKTYFLDPSFEQTTGNLLLDGFIN). Residues 72-92 (GVGTILVLGCVSFIMLAFVLF) traverse the membrane as a helical segment. The Cytoplasmic segment spans residues 93–96 (DFRR). A helical membrane pass occupies residues 97–117 (IVKAWLTLSCLLILFGVSAQT). At 118–136 (LHDMFSQVFDQDDNNQYYM) the chain is on the lumenal side. The helical transmembrane segment at 137–157 (TIVLIVVPTVVYGFGGIYAFF) threads the bilayer. The Cytoplasmic portion of the chain corresponds to 158 to 160 (SNS). The helical transmembrane segment at 161 to 181 (SLILHQIFVVTNCSLISVFYL) threads the bilayer. Residues 182–190 (RVFPSKTTW) lie on the Lumenal side of the membrane. The helical transmembrane segment at 191–211 (FVLWIVLFWDLFAVLAPMGPL) threads the bilayer. Asp200 is an active-site residue. Residues 212-389 (KKVQEKASDY…DALNDGEVLR (178 aa)) are Cytoplasmic-facing. Residues 287-356 (INPDSVPTEH…SDISTAEECD (70 aa)) are disordered. The segment covering 326–350 (SETSSGSSNLSSSDSSTTVSTSDIS) has biased composition (low complexity). A helical membrane pass occupies residues 390–410 (LGFGDFVFYSLLIGQAAASGC). The active site involves Asp394. A topological domain (lumenal) is located at residue Pro411. Residues 412 to 432 (FAVISAALGILFGLVVTLTVF) form a helical membrane-spanning segment. At 433–439 (STEESTT) the chain is on the cytoplasmic side. A PAL motif is present at residues 440 to 442 (PAL). Residues 440–460 (PALPLPVICGTFCYFSSMFFW) constitute an intramembrane region (helical). Topologically, residues 461-465 (EQLYG) are cytoplasmic.

Belongs to the peptidase A22A family. Homodimer. Potential component of the gamma-secretase complex, a complex probably composed of the presenilin homodimer (sel-12, hop-1 or spe-4), nicastrin (aph-2), aph-1 and pen-2.

It is found in the endoplasmic reticulum membrane. Its subcellular location is the golgi apparatus. The protein localises to the cis-Golgi network membrane. Functionally, potential catalytic subunit of the gamma-secretase complex during spermatogenesis, an endoprotease complex that catalyzes the intramembrane cleavage of integral membrane proteins such as Notch receptors (lin-12 or glp-1). Involved in spermatid formation during meiosis II. May be required for proper localization of macromolecules that are subject to asymmetric partitioning during spermatogenesis. The polypeptide is Presenilin spe-4 (Caenorhabditis elegans).